The chain runs to 130 residues: Sigma-w pathway protein YsdB (130 aa).

Residues 2–22 form a helical membrane-spanning segment; that stretch reads FVMVLRIILLALFAYCIYAVV.

The protein resides in the membrane. May mediate a negative feedback loop that down-regulates the expression of the sigma-W regulon following the activation of sigma-W in response to conditions of cell envelope stress. Might interact with and inhibit the activity of the protease PrsW, or could bind to the anti-sigma-W factor RsiW and thereby protect it from PrsW-mediated cleavage. The protein is Sigma-w pathway protein YsdB (ysdB) of Bacillus subtilis (strain 168).